A 545-amino-acid polypeptide reads, in one-letter code: Phospholipase B-like 1 (545 aa).

An N-terminal signal peptide occupies residues 1 to 35 (MSRHSQDERLGLPQPPALLPLLLLLLAVAVPLSQA). Asparagine 68 is a glycosylation site (N-linked (GlcNAc...) (high mannose) asparagine; alternate). Asparagine 68 carries an N-linked (GlcNAc...) (hybrid) asparagine; alternate glycan. Positions 206–224 (LSPTKNSSLKFFKRWDMGH) are cleaved as a propeptide — removed in mature form. N-linked (GlcNAc...) (high mannose) asparagine; alternate glycosylation is found at asparagine 305, asparagine 363, and asparagine 408. Asparagine 305, asparagine 363, and asparagine 408 each carry an N-linked (GlcNAc...) (hybrid) asparagine; alternate glycan. Cystine bridges form between cysteine 467-cysteine 472 and cysteine 471-cysteine 486. The N-linked (GlcNAc...) (high mannose) asparagine; alternate glycan is linked to asparagine 523. Asparagine 523 is a glycosylation site (N-linked (GlcNAc...) (hybrid) asparagine; alternate).

This sequence belongs to the phospholipase B-like family. May form a homodimer, each monomer is composed of a chain A and a chain B. In terms of processing, the maturation cleavages that produces chains A and B are required to open the putative substrate binding pocket. Both chains A and B remain associated in the mature protein.

The protein localises to the lysosome. Functionally, exhibits a weak phospholipase activity, acting on various phospholipids, including phosphatidylcholine, phosphatidylinositol, phosphatidylethanolamine and lysophospholipids. However, in view of the small size of the putative binding pocket, it has been proposed that it may act rather as an amidase or a peptidase. This is Phospholipase B-like 1 (PLBD1) from Bos taurus (Bovine).